Reading from the N-terminus, the 610-residue chain is Anthocyanin regulatory Lc protein (610 aa).

Disordered stretches follow at residues 402–422 and 468–524; these read ATGA…MSER and LESS…PVLT. Positions 412–461 constitute a bHLH domain; it reads TGTKNHVMSERKRREKLNEMFLVLKSLLPSIHRVNKASILAETIAYLKEL. Over residues 481 to 495 the composition is skewed to polar residues; sequence TTTRLITRPSRGNNE. The segment covering 508–519 has biased composition (basic and acidic residues); that stretch reads KSPELGRDDVER.

This sequence belongs to the bHLH protein family. As to quaternary structure, efficient DNA binding requires dimerization with another bHLH protein.

The protein localises to the nucleus. Its function is as follows. Putative transcriptional activator. Controls tissue-specific synthesis of anthocyanin pigments in various parts of the maize plant. The polypeptide is Anthocyanin regulatory Lc protein (LC) (Zea mays (Maize)).